The following is a 326-amino-acid chain: 5,10-methylenetetrahydromethanopterin reductase (326 aa).

The protein belongs to the mer family.

The protein resides in the cytoplasm. The catalysed reaction is 5-methyl-5,6,7,8-tetrahydromethanopterin + oxidized coenzyme F420-(gamma-L-Glu)(n) + H(+) = 5,10-methylenetetrahydromethanopterin + reduced coenzyme F420-(gamma-L-Glu)(n). It participates in one-carbon metabolism; methanogenesis from CO(2); methyl-coenzyme M from 5,10-methylene-5,6,7,8-tetrahydromethanopterin: step 1/2. In terms of biological role, catalyzes the reversible reduction of methylene-H(4)MPT to methyl-H(4)MPT. The polypeptide is 5,10-methylenetetrahydromethanopterin reductase (Methanolobus tindarius).